Here is a 197-residue protein sequence, read N- to C-terminus: COMM domain-containing protein 6 (197 aa).

Residues glutamate 130–valine 197 form the COMM domain.

Belongs to the COMM domain-containing protein 6 family. As to quaternary structure, component of the commander complex consisting of the CCC subcomplex and the retriever subcomplex. Component of the CCC subcomplex.

The protein resides in the nucleus. It localises to the cytoplasm. Scaffold protein in the commander complex that is essential for endosomal recycling of transmembrane cargos; the commander complex is composed of the CCC subcomplex and the retriever subcomplex. May modulate activity of cullin-RING E3 ubiquitin ligase (CRL) complexes. Down-regulates activation of NF-kappa-B. Inhibits TNF-induced NFKB1 activation. The chain is COMM domain-containing protein 6 (commd6) from Xenopus laevis (African clawed frog).